The chain runs to 245 residues: tRNA pseudouridine synthase A 1 (245 aa).

Asp53 serves as the catalytic Nucleophile. Position 111 (Tyr111) interacts with substrate.

The protein belongs to the tRNA pseudouridine synthase TruA family. In terms of assembly, homodimer.

It carries out the reaction uridine(38/39/40) in tRNA = pseudouridine(38/39/40) in tRNA. In terms of biological role, formation of pseudouridine at positions 38, 39 and 40 in the anticodon stem and loop of transfer RNAs. In Clostridium tetani (strain Massachusetts / E88), this protein is tRNA pseudouridine synthase A 1.